The following is a 365-amino-acid chain: Chorismate synthase (365 aa).

Residues arginine 48 and arginine 54 each coordinate NADP(+). Residues 125-127 (RSS), 238-239 (NA), glycine 278, 293-297 (KPTSS), and arginine 319 each bind FMN.

Belongs to the chorismate synthase family. As to quaternary structure, homotetramer. FMNH2 serves as cofactor.

It catalyses the reaction 5-O-(1-carboxyvinyl)-3-phosphoshikimate = chorismate + phosphate. It participates in metabolic intermediate biosynthesis; chorismate biosynthesis; chorismate from D-erythrose 4-phosphate and phosphoenolpyruvate: step 7/7. In terms of biological role, catalyzes the anti-1,4-elimination of the C-3 phosphate and the C-6 proR hydrogen from 5-enolpyruvylshikimate-3-phosphate (EPSP) to yield chorismate, which is the branch point compound that serves as the starting substrate for the three terminal pathways of aromatic amino acid biosynthesis. This reaction introduces a second double bond into the aromatic ring system. This chain is Chorismate synthase, found in Alteromonas mediterranea (strain DSM 17117 / CIP 110805 / LMG 28347 / Deep ecotype).